A 279-amino-acid polypeptide reads, in one-letter code: Tryptophan 2,3-dioxygenase (279 aa).

Substrate is bound by residues 48 to 52 (FIVIH), Tyr110, and Arg114. His237 serves as a coordination point for heme. Thr251 lines the substrate pocket.

This sequence belongs to the tryptophan 2,3-dioxygenase family. Homotetramer. The cofactor is heme.

It catalyses the reaction L-tryptophan + O2 = N-formyl-L-kynurenine. It functions in the pathway amino-acid degradation; L-tryptophan degradation via kynurenine pathway; L-kynurenine from L-tryptophan: step 1/2. Heme-dependent dioxygenase that catalyzes the oxidative cleavage of the L-tryptophan (L-Trp) pyrrole ring and converts L-tryptophan to N-formyl-L-kynurenine. Catalyzes the oxidative cleavage of the indole moiety. This chain is Tryptophan 2,3-dioxygenase, found in Bacillus thuringiensis (strain Al Hakam).